The sequence spans 277 residues: Putative pyruvate, phosphate dikinase regulatory protein (277 aa).

156 to 163 (GVSRTSKT) is a binding site for ADP.

This sequence belongs to the pyruvate, phosphate/water dikinase regulatory protein family. PDRP subfamily.

It carries out the reaction N(tele)-phospho-L-histidyl/L-threonyl-[pyruvate, phosphate dikinase] + ADP = N(tele)-phospho-L-histidyl/O-phospho-L-threonyl-[pyruvate, phosphate dikinase] + AMP + H(+). It catalyses the reaction N(tele)-phospho-L-histidyl/O-phospho-L-threonyl-[pyruvate, phosphate dikinase] + phosphate + H(+) = N(tele)-phospho-L-histidyl/L-threonyl-[pyruvate, phosphate dikinase] + diphosphate. In terms of biological role, bifunctional serine/threonine kinase and phosphorylase involved in the regulation of the pyruvate, phosphate dikinase (PPDK) by catalyzing its phosphorylation/dephosphorylation. The polypeptide is Putative pyruvate, phosphate dikinase regulatory protein (Carboxydothermus hydrogenoformans (strain ATCC BAA-161 / DSM 6008 / Z-2901)).